The primary structure comprises 1470 residues: Calmodulin-regulated spectrin-associated protein 2 (1470 aa).

One can recognise a Calponin-homology (CH) domain in the interval Trp222–Glu335. Residues Ser374 to Ile397 are disordered. Polar residues predominate over residues Phe380–His390. Phosphoserine is present on residues Ser402 and Ser404. The residue at position 412 (Thr412) is a Phosphothreonine. Phosphoserine is present on residues Ser450, Ser581, Ser582, Ser594, and Ser656. Disordered stretches follow at residues Gln580–Ser622 and Ala648–Glu712. Residue Thr661 is modified to Phosphothreonine. Phosphoserine is present on Ser663. The span at Ser663–Ser682 shows a compositional bias: low complexity. The span at Gln686–Gly696 shows a compositional bias: basic and acidic residues. A coiled-coil region spans residues Leu739–Met776. The span at Arg796–Met835 shows a compositional bias: basic and acidic residues. Positions Arg796–Glu864 are disordered. Ser845 is subject to Phosphoserine. Positions Glu870–Gln909 form a coiled coil. Residues Met905 to Gly1016 form an MBD region region. Ser914 and Ser919 each carry phosphoserine. 2 disordered regions span residues Arg930–Ser1059 and Asn1078–Pro1099. A compositionally biased stretch (low complexity) spans Ser935–Pro946. Residues Ser952–Pro971 are compositionally biased toward polar residues. Phosphothreonine is present on residues Thr979, Thr984, and Thr986. Residues Ser990 and Ser1001 each carry the phosphoserine modification. The span at Ser1001–Ser1011 shows a compositional bias: polar residues. Composition is skewed to basic and acidic residues over residues Glu1020 to Glu1037 and Ser1044 to Pro1056. Over residues Thr1086 to Ala1098 the composition is skewed to pro residues. Position 1129 is a phosphoserine (Ser1129). Residues Lys1147 to Arg1219 are a coiled coil. Basic and acidic residues predominate over residues Arg1167–Ile1233. The interval Arg1167–Glu1327 is disordered. Positions Ser1268–Thr1280 are enriched in polar residues. Phosphoserine is present on residues Ser1294, Ser1300, and Ser1302. Polar residues predominate over residues Asn1315–Glu1327. One can recognise a CKK domain in the interval Gly1330–Lys1464.

This sequence belongs to the CAMSAP1 family. As to quaternary structure, interacts with CAMSAP3. Interacts with KATNA1 and KATNB1; leading to regulate the length of CAMSAP2-decorated microtubule stretches. Interacts with a complex formed by AKAP9 and PDE4DIP; this interaction, which is PDE4DIP isoform-specific, recruits CAMSAP2 to the Golgi. Interacts with MAPRE1/EB1. As to expression, present in the soma, axon, and dendritic shaft of hippocampal neurons (at protein level).

It localises to the cytoplasm. It is found in the cytoskeleton. Its subcellular location is the golgi apparatus. The protein resides in the cilium basal body. In terms of biological role, key microtubule-organizing protein that specifically binds the minus-end of non-centrosomal microtubules and regulates their dynamics and organization. Specifically recognizes growing microtubule minus-ends and autonomously decorates and stabilizes microtubule lattice formed by microtubule minus-end polymerization. Acts on free microtubule minus-ends that are not capped by microtubule-nucleating proteins or other factors and protects microtubule minus-ends from depolymerization. In addition, it also reduces the velocity of microtubule polymerization. Through the microtubule cytoskeleton, also regulates the organization of cellular organelles including the Golgi and the early endosomes. Essential for the tethering, but not for nucleation of non-centrosomal microtubules at the Golgi: together with Golgi-associated proteins AKAP9 and PDE4DIP, required to tether non-centrosomal minus-end microtubules to the Golgi, an important step for polarized cell movement. Also acts as a regulator of neuronal polarity and development: localizes to non-centrosomal microtubule minus-ends in neurons and stabilizes non-centrosomal microtubules, which is required for neuronal polarity, axon specification and dendritic branch formation. Through the microtubule cytoskeleton, regulates the autophagosome transport. The chain is Calmodulin-regulated spectrin-associated protein 2 from Rattus norvegicus (Rat).